The sequence spans 158 residues: Large ribosomal subunit protein bL17 (158 aa).

Positions 119–158 (APAAAPEAEEKGEKKAAKAPKAEKAPKAEKKPAKKAAKAE) are disordered. Over residues 126 to 158 (AEEKGEKKAAKAPKAEKAPKAEKKPAKKAAKAE) the composition is skewed to basic and acidic residues.

Belongs to the bacterial ribosomal protein bL17 family. In terms of assembly, part of the 50S ribosomal subunit. Contacts protein L32.

The polypeptide is Large ribosomal subunit protein bL17 (Anaeromyxobacter sp. (strain K)).